The primary structure comprises 216 residues: Uracil phosphoribosyltransferase (216 aa).

5-phospho-alpha-D-ribose 1-diphosphate is bound by residues Arg-85, Arg-110, and 135-143; that span reads DPMVATGYS. Uracil contacts are provided by residues Ile-200 and 205–207; that span reads GDA. A 5-phospho-alpha-D-ribose 1-diphosphate-binding site is contributed by Asp-206.

This sequence belongs to the UPRTase family. Mg(2+) is required as a cofactor.

The enzyme catalyses UMP + diphosphate = 5-phospho-alpha-D-ribose 1-diphosphate + uracil. It participates in pyrimidine metabolism; UMP biosynthesis via salvage pathway; UMP from uracil: step 1/1. With respect to regulation, allosterically activated by GTP. In terms of biological role, catalyzes the conversion of uracil and 5-phospho-alpha-D-ribose 1-diphosphate (PRPP) to UMP and diphosphate. This chain is Uracil phosphoribosyltransferase, found in Burkholderia vietnamiensis (strain G4 / LMG 22486) (Burkholderia cepacia (strain R1808)).